Reading from the N-terminus, the 117-residue chain is Large ribosomal subunit protein bL20 (117 aa).

Belongs to the bacterial ribosomal protein bL20 family.

Functionally, binds directly to 23S ribosomal RNA and is necessary for the in vitro assembly process of the 50S ribosomal subunit. It is not involved in the protein synthesizing functions of that subunit. In Carboxydothermus hydrogenoformans (strain ATCC BAA-161 / DSM 6008 / Z-2901), this protein is Large ribosomal subunit protein bL20.